Here is a 332-residue protein sequence, read N- to C-terminus: Ribosomal RNA small subunit methyltransferase H (332 aa).

S-adenosyl-L-methionine-binding positions include Gly-37–Tyr-39, Asp-55, Phe-82, Asp-103, and Gln-110. Positions Thr-281–Arg-332 are disordered.

Belongs to the methyltransferase superfamily. RsmH family.

It localises to the cytoplasm. It carries out the reaction cytidine(1402) in 16S rRNA + S-adenosyl-L-methionine = N(4)-methylcytidine(1402) in 16S rRNA + S-adenosyl-L-homocysteine + H(+). Specifically methylates the N4 position of cytidine in position 1402 (C1402) of 16S rRNA. The chain is Ribosomal RNA small subunit methyltransferase H from Rhodopseudomonas palustris (strain BisA53).